The chain runs to 116 residues: NADH-ubiquinone oxidoreductase chain 3 (116 aa).

3 consecutive transmembrane segments (helical) span residues 3-23, 56-76, and 87-107; these read LIMT…TVSF, FFLV…LLPL, and GTFF…IYEW.

Belongs to the complex I subunit 3 family.

Its subcellular location is the mitochondrion membrane. The enzyme catalyses a ubiquinone + NADH + 5 H(+)(in) = a ubiquinol + NAD(+) + 4 H(+)(out). Functionally, core subunit of the mitochondrial membrane respiratory chain NADH dehydrogenase (Complex I) that is believed to belong to the minimal assembly required for catalysis. Complex I functions in the transfer of electrons from NADH to the respiratory chain. The immediate electron acceptor for the enzyme is believed to be ubiquinone. This is NADH-ubiquinone oxidoreductase chain 3 (MT-ND3) from Carassius auratus (Goldfish).